We begin with the raw amino-acid sequence, 213 residues long: Redox-sensing transcriptional repressor Rex (213 aa).

The H-T-H motif DNA-binding region spans 16-55 (VYSRFLERMDRNGIVTVSSGEIAEGVGVSSAQVRKDLAYF). 90–95 (GAGNLG) lines the NAD(+) pocket.

This sequence belongs to the transcriptional regulatory Rex family. As to quaternary structure, homodimer.

The protein resides in the cytoplasm. In terms of biological role, modulates transcription in response to changes in cellular NADH/NAD(+) redox state. This is Redox-sensing transcriptional repressor Rex from Pelotomaculum thermopropionicum (strain DSM 13744 / JCM 10971 / SI).